A 332-amino-acid polypeptide reads, in one-letter code: Putative peptide import ATP-binding protein BruAb2_1033 (332 aa).

In terms of domain architecture, ABC transporter spans 11–261 (LEVSNLSVDF…PLHPYTEGLL (251 aa)). An ATP-binding site is contributed by 47 to 54 (GESGSGKS).

The protein belongs to the ABC transporter superfamily. In terms of assembly, the complex is composed of two ATP-binding proteins (BruAb2_1033 and BruAb2_1034), two transmembrane proteins (BruAb2_1031 and BruAb2_1032) and a solute-binding protein (BruAb2_1030).

The protein resides in the cell inner membrane. In terms of biological role, probably part of an ABC transporter complex that could be involved in peptide import. Probably responsible for energy coupling to the transport system. This Brucella abortus biovar 1 (strain 9-941) protein is Putative peptide import ATP-binding protein BruAb2_1033.